We begin with the raw amino-acid sequence, 268 residues long: L-aspartate dehydrogenase (268 aa).

The NAD(+) site is built by Ala-125 and Asn-191. The active site involves His-221.

The protein belongs to the L-aspartate dehydrogenase family.

It carries out the reaction L-aspartate + NADP(+) + H2O = oxaloacetate + NH4(+) + NADPH + H(+). The enzyme catalyses L-aspartate + NAD(+) + H2O = oxaloacetate + NH4(+) + NADH + H(+). Its pathway is cofactor biosynthesis; NAD(+) biosynthesis; iminoaspartate from L-aspartate (dehydrogenase route): step 1/1. Its function is as follows. Specifically catalyzes the NAD or NADP-dependent dehydrogenation of L-aspartate to iminoaspartate. The chain is L-aspartate dehydrogenase from Brucella anthropi (strain ATCC 49188 / DSM 6882 / CCUG 24695 / JCM 21032 / LMG 3331 / NBRC 15819 / NCTC 12168 / Alc 37) (Ochrobactrum anthropi).